A 258-amino-acid chain; its full sequence is 5'-nucleotidase SurE (258 aa).

Residues Asp-8, Asp-9, Ser-40, and Asn-93 each contribute to the a divalent metal cation site.

The protein belongs to the SurE nucleotidase family. It depends on a divalent metal cation as a cofactor.

The protein localises to the cytoplasm. The catalysed reaction is a ribonucleoside 5'-phosphate + H2O = a ribonucleoside + phosphate. Its function is as follows. Nucleotidase that shows phosphatase activity on nucleoside 5'-monophosphates. This is 5'-nucleotidase SurE from Afipia carboxidovorans (strain ATCC 49405 / DSM 1227 / KCTC 32145 / OM5) (Oligotropha carboxidovorans).